A 347-amino-acid chain; its full sequence is Protein-glutamate methylesterase/protein-glutamine glutaminase 2 (347 aa).

The region spanning 2–119 is the Response regulatory domain; sequence RVMIVDDSAV…LGGADLYRKD (118 aa). Asp52 carries the 4-aspartylphosphate modification. Positions 131–153 are disordered; that stretch reads AARPAPPQAAPRPTLAPPSSDPA. The segment covering 134 to 150 has biased composition (pro residues); the sequence is PAPPQAAPRPTLAPPSS. The CheB-type methylesterase domain occupies 152–346; sequence PAGPIEAVVV…PYIASRARSV (195 aa). Catalysis depends on residues Ser164, His191, and Asp288.

The protein belongs to the CheB family. Post-translationally, phosphorylated by CheA. Phosphorylation of the N-terminal regulatory domain activates the methylesterase activity.

Its subcellular location is the cytoplasm. It carries out the reaction [protein]-L-glutamate 5-O-methyl ester + H2O = L-glutamyl-[protein] + methanol + H(+). The catalysed reaction is L-glutaminyl-[protein] + H2O = L-glutamyl-[protein] + NH4(+). Involved in chemotaxis. Part of a chemotaxis signal transduction system that modulates chemotaxis in response to various stimuli. Catalyzes the demethylation of specific methylglutamate residues introduced into the chemoreceptors (methyl-accepting chemotaxis proteins or MCP) by CheR. Also mediates the irreversible deamidation of specific glutamine residues to glutamic acid. This is Protein-glutamate methylesterase/protein-glutamine glutaminase 2 from Caulobacter vibrioides (strain ATCC 19089 / CIP 103742 / CB 15) (Caulobacter crescentus).